Here is a 2346-residue protein sequence, read N- to C-terminus: Acetyl-CoA carboxylase 1 (2346 aa).

Residue M1 is modified to N-acetylmethionine. S5, S23, S25, S29, S34, S48, S50, and S53 each carry phosphoserine. T58 carries the phosphothreonine modification. At S78 the chain carries Phosphoserine. S80 is modified (phosphoserine; by AMPK). Positions 117–618 (VIEKVLIANN…GTGWLDRLIA (502 aa)) constitute a Biotin carboxylation domain. One can recognise an ATP-grasp domain in the interval 275–466 (SKRILNVPQE…LPAAQLQIAM (192 aa)). ATP is bound at residue 315 to 320 (GGGGKG). Mg(2+)-binding residues include E424, E437, and N439. 3 residues coordinate Mn(2+): E424, E437, and N439. The active site involves R441. Phosphothreonine is present on T610. Positions 745–819 (FEKENDPSVL…DPGCVIAKMQ (75 aa)) constitute a Biotinyl-binding domain. The residue at position 786 (K786) is an N6-biotinyllysine. S835, S1201, S1216, and S1218 each carry phosphoserine. The residue at position 1227 (T1227) is a Phosphothreonine. Residues S1259, S1263, and S1273 each carry the phosphoserine modification. K1334 carries the post-translational modification N6-acetyllysine. In terms of domain architecture, CoA carboxyltransferase N-terminal spans 1576 to 1914 (PYVTKDQLQS…SVYSSVPLLN (339 aa)). Residues 1576-2234 (PYVTKDQLQS…EDLVKKKIHN (659 aa)) form a carboxyltransferase region. Residues R1823, K2127, and R2129 each coordinate CoA. A CoA carboxyltransferase C-terminal domain is found at 1918–2234 (PIDRVIEFVP…EDLVKKKIHN (317 aa)). T2153 carries the phosphothreonine modification.

As to quaternary structure, monomer, homodimer, and homotetramer. Can form filamentous polymers. Interacts in its inactive phosphorylated form with the BRCT domains of BRCA1 which prevents ACACA dephosphorylation and inhibits lipid synthesis. Interacts with MID1IP1; interaction with MID1IP1 promotes oligomerization and increases its activity. It depends on Mg(2+) as a cofactor. The cofactor is Mn(2+). Biotin is required as a cofactor. In terms of processing, phosphorylation on Ser-1263 is required for interaction with BRCA1. Phosphorylation at Ser-80 by AMPK inactivates enzyme activity. Post-translationally, the biotin cofactor is covalently attached to the central biotinyl-binding domain and is required for the catalytic activity.

It is found in the cytoplasm. Its subcellular location is the cytosol. It carries out the reaction hydrogencarbonate + acetyl-CoA + ATP = malonyl-CoA + ADP + phosphate + H(+). The protein operates within lipid metabolism; malonyl-CoA biosynthesis; malonyl-CoA from acetyl-CoA: step 1/1. With respect to regulation, inhibited by phosphorylation. Citrate promotes oligomerization of the protein into filaments that correspond to the most active form of the carboxylase. In terms of biological role, cytosolic enzyme that catalyzes the carboxylation of acetyl-CoA to malonyl-CoA, the first and rate-limiting step of de novo fatty acid biosynthesis. This is a 2 steps reaction starting with the ATP-dependent carboxylation of the biotin carried by the biotin carboxyl carrier (BCC) domain followed by the transfer of the carboxyl group from carboxylated biotin to acetyl-CoA. This is Acetyl-CoA carboxylase 1 from Bos taurus (Bovine).